Consider the following 548-residue polypeptide: Membrane protein insertase YidC (548 aa).

Residues 6-26 (NLLVIALLFVSFMIWQAWEQD) form a helical membrane-spanning segment. Residues 28-55 (NPQPQAQQTTQTTTTAAGSAADQGVPAS) are disordered. The span at 30 to 50 (QPQAQQTTQTTTTAAGSAADQ) shows a compositional bias: low complexity. 4 consecutive transmembrane segments (helical) span residues 350-370 (FVGN…GIMY), 420-440 (LGGC…YYML), 458-478 (LSAQ…MFFI), and 499-519 (PVIF…YYIV).

Belongs to the OXA1/ALB3/YidC family. Type 1 subfamily. Interacts with the Sec translocase complex via SecD. Specifically interacts with transmembrane segments of nascent integral membrane proteins during membrane integration.

Its subcellular location is the cell inner membrane. Required for the insertion and/or proper folding and/or complex formation of integral membrane proteins into the membrane. Involved in integration of membrane proteins that insert both dependently and independently of the Sec translocase complex, as well as at least some lipoproteins. Aids folding of multispanning membrane proteins. In Escherichia coli O139:H28 (strain E24377A / ETEC), this protein is Membrane protein insertase YidC.